Consider the following 177-residue polypeptide: Translation initiation factor IF-3 (177 aa).

It belongs to the IF-3 family. As to quaternary structure, monomer.

It is found in the cytoplasm. Functionally, IF-3 binds to the 30S ribosomal subunit and shifts the equilibrium between 70S ribosomes and their 50S and 30S subunits in favor of the free subunits, thus enhancing the availability of 30S subunits on which protein synthesis initiation begins. This Clostridium perfringens (strain 13 / Type A) protein is Translation initiation factor IF-3.